The following is a 1374-amino-acid chain: Y' element ATP-dependent helicase YML133C (1374 aa).

Residues 375 to 552 (EIYMADTPSV…LQRIGLTGLA (178 aa)) form the Helicase ATP-binding domain. 388-395 (APPGYGKT) contacts ATP. Positions 609-758 (KLLLALFEIE…EFYGLESKKG (150 aa)) constitute a Helicase C-terminal domain. Residues 832–975 (ANASTNATTN…ATTTESTNAS (144 aa)) are compositionally biased toward low complexity. The segment at 832 to 999 (ANASTNATTN…RFHPVTDINK (168 aa)) is disordered. Over residues 976 to 999 (AKEDANKDGNAEDNRFHPVTDINK) the composition is skewed to basic and acidic residues.

It belongs to the helicase family. Yeast subtelomeric Y' repeat subfamily.

Catalyzes DNA unwinding and is involved in telomerase-independent telomere maintenance. The sequence is that of Y' element ATP-dependent helicase YML133C from Saccharomyces cerevisiae (strain ATCC 204508 / S288c) (Baker's yeast).